The chain runs to 647 residues: Threonine--tRNA ligase (647 aa).

The 61-residue stretch at 1 to 61 folds into the TGS domain; the sequence is MINITFPDGA…TEDGSIEIVT (61 aa). Residues 242–540 form a catalytic region; it reads DHRKLGKELD…LIENYKGAFP (299 aa). Residues Cys336, His387, and His517 each contribute to the Zn(2+) site.

This sequence belongs to the class-II aminoacyl-tRNA synthetase family. In terms of assembly, homodimer. Zn(2+) serves as cofactor.

The protein localises to the cytoplasm. The catalysed reaction is tRNA(Thr) + L-threonine + ATP = L-threonyl-tRNA(Thr) + AMP + diphosphate + H(+). In terms of biological role, catalyzes the attachment of threonine to tRNA(Thr) in a two-step reaction: L-threonine is first activated by ATP to form Thr-AMP and then transferred to the acceptor end of tRNA(Thr). Also edits incorrectly charged L-seryl-tRNA(Thr). This is Threonine--tRNA ligase from Streptococcus pneumoniae serotype 19F (strain G54).